A 391-amino-acid chain; its full sequence is Cathepsin E (391 aa).

A signal peptide spans 1 to 19; the sequence is MKTFLLLLLVLLELGQAPG. The propeptide at 20-53 is activation peptide; the sequence is ALHRVPLSRRESLRKKLRAQGQLTELWKSQNLNM. A Peptidase A1 domain is found at 74–387; that stretch reads YFGTISIGSP…DRGNNRVGLA (314 aa). Asn-86 carries N-linked (GlcNAc...) asparagine glycosylation. Asp-92 is a catalytic residue. Intrachain disulfides connect Cys-105–Cys-110 and Cys-267–Cys-271. Asp-276 is an active-site residue. Cys-309 and Cys-346 are joined by a disulfide.

The protein belongs to the peptidase A1 family. In terms of assembly, homodimer; disulfide-linked. Glycosylated. The nature of the carbohydrate chain varies between cell types. Expressed abundantly in the surface and foveolar epithelial cells of the fundic and pyloric stomach mucosa, and at very low levels in the spleen.

It is found in the endosome. The catalysed reaction is Similar to cathepsin D, but slightly broader specificity.. Its function is as follows. May have a role in immune function. Probably involved in the processing of antigenic peptides during MHC class II-mediated antigen presentation. May play a role in activation-induced lymphocyte depletion in the thymus, and in neuronal degeneration and glial cell activation in the brain. This chain is Cathepsin E (CTSE), found in Cavia porcellus (Guinea pig).